An 878-amino-acid chain; its full sequence is Bifunctional heparan sulfate N-deacetylase/N-sulfotransferase 1 (878 aa).

At 1–17 (MSLSLKTRRFGRPVRPQ) the chain is on the cytoplasmic side. The interval 1-169 (MSLSLKTRRF…VEYGVGIIGF (169 aa)) is sufficient for localization to Golgi membrane. The helical; Signal-anchor for type II membrane protein transmembrane segment at 18–38 (LVLLLLFALCLLSVFISAYYL) threads the bilayer. The Lumenal segment spans residues 39 to 878 (YGWKRGLEPS…WLREELQNTR (840 aa)). The segment at 40 to 594 (GWKRGLEPSG…KRHKDIWSKE (555 aa)) is heparan sulfate N-deacetylase 1. N-linked (GlcNAc...) asparagine glycosylation is found at N231, N347, and N397. Residues 595–878 (KTCDRFPKLL…WLREELQNTR (284 aa)) form a heparan sulfate N-sulfotransferase 1 region. The For sulfotransferase activity role is filled by K610. Adenosine 3',5'-bisphosphate is bound at residue 610-614 (KTGTT). N663 is a glycosylation site (N-linked (GlcNAc...) asparagine). Residues S708 and W813 each contribute to the adenosine 3',5'-bisphosphate site. Cysteines 814 and 824 form a disulfide. Residue 829–833 (KGRKY) coordinates adenosine 3',5'-bisphosphate.

The protein belongs to the sulfotransferase 1 family. NDST subfamily. As to quaternary structure, monomer.

It localises to the golgi apparatus membrane. It is found in the golgi apparatus. The protein resides in the trans-Golgi network membrane. The catalysed reaction is alpha-D-glucosaminyl-[heparan sulfate](n) + 3'-phosphoadenylyl sulfate = N-sulfo-alpha-D-glucosaminyl-[heparan sulfate](n) + adenosine 3',5'-bisphosphate + 2 H(+). It functions in the pathway glycan metabolism; heparan sulfate biosynthesis. The protein operates within glycan metabolism; heparin biosynthesis. Its function is as follows. Essential bifunctional enzyme that catalyzes both the N-deacetylation and the N-sulfation of glucosamine (GlcNAc) of the glycosaminoglycan in heparan sulfate. Modifies the GlcNAc-GlcA disaccharide repeating sugar backbone to make N-sulfated heparosan, a prerequisite substrate for later modifications in heparin biosynthesis. Plays a role in determining the extent and pattern of sulfation of heparan sulfate. The polypeptide is Bifunctional heparan sulfate N-deacetylase/N-sulfotransferase 1 (ndst1) (Xenopus laevis (African clawed frog)).